Reading from the N-terminus, the 444-residue chain is MLDLAFVRANLELVEARLRARGQNPAELLGDFAAVDQHRRERITEAEQLKATRNKLSEEVARLRKAKEDASAVMEETRQLKTKIEDLERAATEAEEQLRERMARIPNLPYEDVPTGASAEDNVEVKRWGTPREFDFAPKPHWELGEQLGILDFERAAKLSGARFAVYWAEGARLERALAAFMLDLHTREHGYTEVLPPLMVNSRSLFGTGQLPKFAEDLFRCEDGEPYQAGKYRENDHWLIPTAEVPLTNLFRDETLDDSQLSTSLVAHTSCFRSEAGSYGKDVRGIIRQHQFQKVELVKFTRPEDSAAEHEALTRHAETVLERLGLPYRRMLLCTGDMGFSSAKTYDLEVWLPGQQVYREISSCSNFDAFQARRAGIRYRPRGQGKSAHVHTLNGSGLAIGRTWLAILENYQQADGSVRIPEALIPYMGTEVIESRNVAQGAK.

243–245 (TAE) contributes to the L-serine binding site. 274–276 (RSE) is a binding site for ATP. E297 provides a ligand contact to L-serine. An ATP-binding site is contributed by 361 to 364 (EISS). S397 contacts L-serine.

Belongs to the class-II aminoacyl-tRNA synthetase family. Type-1 seryl-tRNA synthetase subfamily. In terms of assembly, homodimer. The tRNA molecule binds across the dimer.

The protein resides in the cytoplasm. It carries out the reaction tRNA(Ser) + L-serine + ATP = L-seryl-tRNA(Ser) + AMP + diphosphate + H(+). The catalysed reaction is tRNA(Sec) + L-serine + ATP = L-seryl-tRNA(Sec) + AMP + diphosphate + H(+). It participates in aminoacyl-tRNA biosynthesis; selenocysteinyl-tRNA(Sec) biosynthesis; L-seryl-tRNA(Sec) from L-serine and tRNA(Sec): step 1/1. Catalyzes the attachment of serine to tRNA(Ser). Is also able to aminoacylate tRNA(Sec) with serine, to form the misacylated tRNA L-seryl-tRNA(Sec), which will be further converted into selenocysteinyl-tRNA(Sec). The polypeptide is Serine--tRNA ligase (Acidobacterium capsulatum (strain ATCC 51196 / DSM 11244 / BCRC 80197 / JCM 7670 / NBRC 15755 / NCIMB 13165 / 161)).